The chain runs to 174 residues: Cell division protein FtsL (174 aa).

Residues 1 to 38 are Cytoplasmic-facing; that stretch reads MLAAPRELSYIPQPVVSSKQSPRSGLSNRRRESRARQK. The chain crosses the membrane as a helical span at residues 39–59; the sequence is ILLLGLVLMGFVIGLSLTFLT. The Extracellular segment spans residues 60 to 174; the sequence is MQVLIKGYKI…EPARQAGAGV (115 aa).

It belongs to the FtsL family.

The protein resides in the cell membrane. Essential cell division protein. The chain is Cell division protein FtsL from Moorella thermoacetica (strain ATCC 39073 / JCM 9320).